The chain runs to 114 residues: Transcription initiation factor IIA subunit 2 (114 aa).

This sequence belongs to the TFIIA subunit 2 family. In terms of assembly, TFIIA is a heterodimer composed of the large toa1 and the small toa2 subunits.

Its subcellular location is the nucleus. In terms of biological role, TFIIA is a component of the transcription machinery of RNA polymerase II and plays an important role in transcriptional activation. TFIIA in a complex with tbp mediates transcriptional activity. The sequence is that of Transcription initiation factor IIA subunit 2 (toa2) from Fusarium vanettenii (strain ATCC MYA-4622 / CBS 123669 / FGSC 9596 / NRRL 45880 / 77-13-4) (Fusarium solani subsp. pisi).